The following is a 407-amino-acid chain: Tryptophan synthase beta chain (407 aa).

K91 is subject to N6-(pyridoxal phosphate)lysine.

This sequence belongs to the TrpB family. As to quaternary structure, tetramer of two alpha and two beta chains. The cofactor is pyridoxal 5'-phosphate.

It carries out the reaction (1S,2R)-1-C-(indol-3-yl)glycerol 3-phosphate + L-serine = D-glyceraldehyde 3-phosphate + L-tryptophan + H2O. It participates in amino-acid biosynthesis; L-tryptophan biosynthesis; L-tryptophan from chorismate: step 5/5. Its function is as follows. The beta subunit is responsible for the synthesis of L-tryptophan from indole and L-serine. This chain is Tryptophan synthase beta chain, found in Streptococcus pneumoniae serotype 2 (strain D39 / NCTC 7466).